A 1442-amino-acid chain; its full sequence is Protein patched homolog 1 (1442 aa).

A disordered region spans residues 1-45 (MASAADALEPESGSSTAGGGSHPVRAARSARGRRRRSGGTRRAAA). At 1–101 (MASAADALEP…GCYIQKNCGK (101 aa)) the chain is on the cytoplasmic side. Residues 28-39 (RSARGRRRRSGG) are compositionally biased toward basic residues. Residues 102 to 122 (FLVVGLLYSAFAVGLRAANLE) form a helical membrane-spanning segment. Residues 123–436 (TNVEELWVEV…LDDILKSFSD (314 aa)) are Extracellular-facing. N-linked (GlcNAc...) asparagine glycans are attached at residues N141, N312, N349, and N414. The chain crosses the membrane as a helical span at residues 437-457 (VSVIRVASGYLLMLAYACLTM). The region spanning 438-598 (SVIRVASGYL…LLIFPAILSM (161 aa)) is the SSD domain. Residues 458–472 (LRWDCAKSQGAVGLA) are Cytoplasmic-facing. The helical transmembrane segment at 473-493 (GVLLVALSVAAGLGLCSLIGI) threads the bilayer. Over 494-501 (SFNAATTQ) the chain is Extracellular. Residues 502–522 (VLPFLALGVGVDDVFLLAHAF) form a helical membrane-spanning segment. At 523 to 547 (SETGQNKRIPFEDRTGECLKRTGAS) the chain is on the cytoplasmic side. Residues 548-568 (VALTSISNVTAFFMAALIPIP) form a helical membrane-spanning segment. Residues 569–577 (ALRAFSLQA) are Extracellular-facing. Residues 578-598 (AVVVVFNFAMVLLIFPAILSM) traverse the membrane as a helical segment. Over 599-747 (DLYRREDRRL…HYAPFLLKPK (149 aa)) the chain is Cytoplasmic. Residues 748-768 (AKVVVIFLFLGLLGLSLYGTT) traverse the membrane as a helical segment. Residues 769 to 1026 (RVRDGLDLTD…WEQYIGLRHW (258 aa)) are Extracellular-facing. N-linked (GlcNAc...) asparagine glycans are attached at residues N827, N874, and N999. The helical transmembrane segment at 1027-1047 (LLLSISVVLACTFLVCALFLL) threads the bilayer. At 1048–1053 (NPWTAG) the chain is on the cytoplasmic side. Residues 1054-1074 (IIVVVLALMTVELFGMMGLIG) traverse the membrane as a helical segment. Residues 1075 to 1082 (IKLSAVPV) lie on the Extracellular side of the membrane. A helical transmembrane segment spans residues 1083–1101 (VILIASVGIGVEFTVHIAL). Topologically, residues 1102–1120 (AFLTAIGDKNRRAVLALEH) are cytoplasmic. Residues 1121–1141 (MFAPVLDGAVSTLLGVLMLAG) traverse the membrane as a helical segment. Residues 1142–1153 (SEFDFIVRYFFA) are Extracellular-facing. Residues 1154–1174 (VLAILTILGVLNGLVLLPVLL) form a helical membrane-spanning segment. Residues 1175-1442 (SFFGPYPEVS…EERTAGKISE (268 aa)) are Cytoplasmic-facing. Disordered regions lie at residues 1188–1231 (GRNR…TTVS) and 1266–1338 (STVV…LNHK). Residues 1217–1226 (SDSSDSEYSS) show a composition bias toward low complexity. A compositionally biased stretch (polar residues) spans 1276–1293 (QSSPRLQSNPEAGTQQVW).

This sequence belongs to the patched family. In terms of processing, glycosylation is necessary for SHH binding. As to expression, expression is seen in the embryonic neural tube, sclerotome, visceral mesoderm, and limb bud.

It is found in the membrane. Acts as a receptor for sonic hedgehog (SHH), indian hedgehog (IHH) and desert hedgehog (DHH). Associates with the smoothened protein (SMO) to transduce the hedgehog's proteins signal. This chain is Protein patched homolog 1 (PTCH1), found in Gallus gallus (Chicken).